A 424-amino-acid polypeptide reads, in one-letter code: MNPDNTIAVITETIPIGMQFDKVYLSTFNMWREILSNTTKTLDISSFYWSLSDEVGTNFGTIILNEIVQLPKRGVRVRVAVNKSNKPLKDVERLQMAGVEVRYIDITNILGGVLHTKFWISDNTHIYLGSANMDWRSLTQVKELGIAIFNNRNLAADLTQIFEVYWYLGVNNLPYNWKNFYPSYYNTDHPLSINVSGVPHSVFIASAPQQLCTMERTNDLTALLSCIRNASKFVYVSVMNFIPIIYSKAGKILFWPYIEDELRRSAIDRQVSVKLLISCWQRSSFIMRNFLRSIAMLKSKNIDIEVKLFIVPDADPPIPYSRVNHAKYMVTDKTAYIGTSNWTGNYFTDTCGASINITPDDGLGLRQQLEDIFMRDWNSKYSYELYDTSPTKRCKLLKNMKQCTNDIYCDEIQPEKEIPEYSLE.

PLD phosphodiesterase domains follow at residues 110–137 and 320–346; these read LGGVLHTKFWISDNTHIYLGSANMDWRS and YSRVNHAKYMVTDKTAYIGTSNWTGNY.

The protein belongs to the orthopoxvirus OPG042 family.

It is found in the virion. DNA nicking enzyme that cleaves extruded cruciform DNA at its tip. Probably nicks viral hairpins. The protein is Virion nicking-joining enzyme (OPG042) of Homo sapiens (Human).